The following is a 459-amino-acid chain: Acetyltransferase pigO (459 aa).

This sequence belongs to the trichothecene O-acetyltransferase family.

The protein operates within secondary metabolite biosynthesis. Acetyltransferase; part of the gene cluster that mediates the biosynthesis of azaphilone pigments (MonAzPs), a complex mixture of compounds with a common azaphilone skeleton very widely used as food colorants. PigM and pigO are involved in the elimination of the omega-1 alcohol with pigM acting as an O-acetyltransferase that synthesizes the O-11 acetyl intermediate whereas pigO eliminates acetic acid to yield an intermediate with a C10(11) double bond. The first step of the pathway is performed by the nrPKS pigA that forms the hexaketide precursor from successive condensations of five malonyl-CoA units, with a simple acetyl-CoA starter unit. The role of esterase pigG is not clear, but it may play at most a supplementary role in the formation of the benzaldehyde produced by the pigA nrPKS. This very reactive benzaldehyde is intercepted by the pigC ketoreductase that to provide the first stable enzyme-free MonAzPs intermediate, 6-(4-hydroxy-2-oxopentyl)-3-methyl-2,4-dioxocyclohexane carbaldehyde, also known as M7PKS-1. The FAD-dependent monooxygenase pigN hydroxylates M7PKS-1 at C-4, which triggers the formation of the pyran ring. PigJ, pigK and pigD are involved in the acetylation of the pyran ring. PigJ and pigK form the two subunits of a dedicated fungal FAS that produces the side chain fatty acyl moiety of MonAzPs and pigD transfers the fatty acyl chain to the C-4 alcohol. PigM and pigO are involved in the elimination of the omega-1 alcohol. PigM acts as an O-acetyltransferase that synthesizes the putative O-11 acetyl intermediate whereas pigO eliminates acetic acid to yield an intermediate with a C10(11) double bond. The dehydration of the C-11 alcohol followed by the reduction of the C6(7) double bond by the NAD(P)H-dependent oxidoreductase pigE increases the electrophilicity of the C-5 ketone of the resulting acyl benzopyran. This in turn sets up the C-5 ketone for an intramolecular Knoevenagel aldol condensation with the C-20 enol of the side chain. This condensation affords the characteristic linear tricyclic carbon skeletons of the yellow pigments that serve as the common precursors for the classical yellow pigments monascin and ankaflavin, orange pigments rubopunctatin and monascorubrin, and red pigments ribropunctamine and monascorubramine. The FAD-dependent oxidoreductase pigF is especially invoved in the biosynthesis of orange and red pigments via desaturation of C6(7). The chain is Acetyltransferase pigO from Monascus ruber (Mold).